We begin with the raw amino-acid sequence, 68 residues long: Kasstasin (68 aa).

Positions 1–20 are cleaved as a signal peptide; that stretch reads MMKKSMLLLFFLGMVSFSLA. Positions 21–44 are excised as a propeptide; the sequence is DDKREDEGEEKRADEGEEKRAAEE. Residues 22-41 are disordered; that stretch reads DKREDEGEEKRADEGEEKRA. Lysine 67 is subject to Lysine amide.

The protein belongs to the frog skin active peptide (FSAP) family. Brevinin subfamily. In terms of tissue distribution, expressed by the skin dorsal glands.

It localises to the secreted. Peptide with potent vasoconstrictor properties (EC50=25 pM). Has moderate antimicrobial activity against Gram-positive bacterium S.aureus (MIC=55 uM) and against Gram-negative bacterium E.coli (MIC=110 uM). Not active against fungus C.albicans. Has weak hemolytic activity against horse erythrocytes. This Phlyctimantis maculatus (Red-legged running frog) protein is Kasstasin.